The chain runs to 132 residues: D-ribose pyranase (132 aa).

His-20 (proton donor) is an active-site residue. Substrate is bound by residues Asp-28, His-99, and 121-123 (YSN).

It belongs to the RbsD / FucU family. RbsD subfamily. Homodecamer.

It is found in the cytoplasm. It carries out the reaction beta-D-ribopyranose = beta-D-ribofuranose. It functions in the pathway carbohydrate metabolism; D-ribose degradation; D-ribose 5-phosphate from beta-D-ribopyranose: step 1/2. Functionally, catalyzes the interconversion of beta-pyran and beta-furan forms of D-ribose. The chain is D-ribose pyranase from Lactococcus lactis subsp. lactis (strain IL1403) (Streptococcus lactis).